We begin with the raw amino-acid sequence, 48 residues long: Delta-stichotoxin-She1a (48 aa).

3 cysteine pairs are disulfide-bonded: C3–C43, C5–C33, and C26–C44.

The protein belongs to the sea anemone sodium channel inhibitory toxin family. Type II subfamily.

It localises to the secreted. The protein resides in the nematocyst. In terms of biological role, binds specifically to voltage-gated sodium channels (Nav), thereby delaying their inactivation during signal transduction. Is highly toxic to crabs (by intrahemocoelic injection), but without effect upon mice (by intraperitoneal injection). In Stichodactyla helianthus (Sun anemone), this protein is Delta-stichotoxin-She1a.